A 285-amino-acid chain; its full sequence is Bifunctional protein FolD (285 aa).

Residues 166–168 (GAS) and I232 contribute to the NADP(+) site.

This sequence belongs to the tetrahydrofolate dehydrogenase/cyclohydrolase family. As to quaternary structure, homodimer.

The catalysed reaction is (6R)-5,10-methylene-5,6,7,8-tetrahydrofolate + NADP(+) = (6R)-5,10-methenyltetrahydrofolate + NADPH. The enzyme catalyses (6R)-5,10-methenyltetrahydrofolate + H2O = (6R)-10-formyltetrahydrofolate + H(+). Its pathway is one-carbon metabolism; tetrahydrofolate interconversion. Functionally, catalyzes the oxidation of 5,10-methylenetetrahydrofolate to 5,10-methenyltetrahydrofolate and then the hydrolysis of 5,10-methenyltetrahydrofolate to 10-formyltetrahydrofolate. This chain is Bifunctional protein FolD, found in Photobacterium profundum (strain SS9).